The following is a 341-amino-acid chain: NADH-quinone oxidoreductase subunit H (341 aa).

Helical transmembrane passes span 16–36, 86–106, 119–139, 165–185, 191–211, 254–274, 276–296, and 315–335; these read LLII…AVAY, VVFV…WAVI, VGVL…IMAG, IGFI…SDVV, MWFI…GLAE, GAMT…LGWL, IPGL…FLWV, and VFLP…TAFG.

The protein belongs to the complex I subunit 1 family. In terms of assembly, NDH-1 is composed of 14 different subunits. Subunits NuoA, H, J, K, L, M, N constitute the membrane sector of the complex.

It is found in the cell inner membrane. The catalysed reaction is a quinone + NADH + 5 H(+)(in) = a quinol + NAD(+) + 4 H(+)(out). Its function is as follows. NDH-1 shuttles electrons from NADH, via FMN and iron-sulfur (Fe-S) centers, to quinones in the respiratory chain. The immediate electron acceptor for the enzyme in this species is believed to be ubiquinone. Couples the redox reaction to proton translocation (for every two electrons transferred, four hydrogen ions are translocated across the cytoplasmic membrane), and thus conserves the redox energy in a proton gradient. This subunit may bind ubiquinone. This Paramagnetospirillum magneticum (strain ATCC 700264 / AMB-1) (Magnetospirillum magneticum) protein is NADH-quinone oxidoreductase subunit H.